The primary structure comprises 97 residues: Co-chaperonin GroES (97 aa).

This sequence belongs to the GroES chaperonin family. Heptamer of 7 subunits arranged in a ring. Interacts with the chaperonin GroEL.

The protein localises to the cytoplasm. Functionally, together with the chaperonin GroEL, plays an essential role in assisting protein folding. The GroEL-GroES system forms a nano-cage that allows encapsulation of the non-native substrate proteins and provides a physical environment optimized to promote and accelerate protein folding. GroES binds to the apical surface of the GroEL ring, thereby capping the opening of the GroEL channel. The sequence is that of Co-chaperonin GroES from Stutzerimonas stutzeri (Pseudomonas stutzeri).